A 349-amino-acid chain; its full sequence is D-alanine--D-alanine ligase (349 aa).

The 203-residue stretch at 133-335 folds into the ATP-grasp domain; it reads QVLESATTIP…YSVLIEELVS (203 aa). Residue 163–218 participates in ATP binding; the sequence is EEKLIYPVFVKPANMGSSVGISKAENRTDLKQAIALALKYDSRVLIEQGVDAREIE. The Mg(2+) site is built by Asp-289, Glu-302, and Asn-304.

It belongs to the D-alanine--D-alanine ligase family. It depends on Mg(2+) as a cofactor. The cofactor is Mn(2+).

It is found in the cytoplasm. The enzyme catalyses 2 D-alanine + ATP = D-alanyl-D-alanine + ADP + phosphate + H(+). It participates in cell wall biogenesis; peptidoglycan biosynthesis. Cell wall formation. The protein is D-alanine--D-alanine ligase of Streptococcus mutans serotype c (strain ATCC 700610 / UA159).